We begin with the raw amino-acid sequence, 134 residues long: Large ribosomal subunit protein bL19 (134 aa).

Residues 108–134 (KSARIVERSDRSDKAKAQKAAAATAAE) form a disordered region. Residues 111 to 123 (RIVERSDRSDKAK) are compositionally biased toward basic and acidic residues. Low complexity predominate over residues 125–134 (QKAAAATAAE).

It belongs to the bacterial ribosomal protein bL19 family.

Functionally, this protein is located at the 30S-50S ribosomal subunit interface and may play a role in the structure and function of the aminoacyl-tRNA binding site. This chain is Large ribosomal subunit protein bL19, found in Methylorubrum extorquens (strain PA1) (Methylobacterium extorquens).